A 510-amino-acid polypeptide reads, in one-letter code: Beta-glucosidase 40 (510 aa).

The first 29 residues, 1-29 (MAHRRLIMTMTKMMMMVTMMMMMDKTCIC), serve as a signal peptide directing secretion. Residues Gln-51, His-152, and 197-198 (NE) contribute to the a beta-D-glucoside site. The Proton donor role is filled by Glu-198. Residues Cys-217 and Cys-225 are joined by a disulfide bond. 2 N-linked (GlcNAc...) asparagine glycosylation sites follow: Asn-229 and Asn-278. Position 341 (Tyr-341) interacts with a beta-D-glucoside. N-linked (GlcNAc...) asparagine glycosylation is present at Asn-349. A beta-D-glucoside-binding positions include Glu-414, Trp-464, 471-472 (EW), and Phe-480. Glu-414 serves as the catalytic Nucleophile. Asn-507 carries an N-linked (GlcNAc...) asparagine glycan.

The protein belongs to the glycosyl hydrolase 1 family.

It catalyses the reaction Hydrolysis of terminal, non-reducing beta-D-glucosyl residues with release of beta-D-glucose.. This chain is Beta-glucosidase 40, found in Arabidopsis thaliana (Mouse-ear cress).